We begin with the raw amino-acid sequence, 198 residues long: Neutrophil gelatinase-associated lipocalin (198 aa).

The first 20 residues, Met1–Ala20, serve as a signal peptide directing secretion. Gln21 bears the Pyrrolidone carboxylic acid mark. Tyr72–Thr74 serves as a coordination point for a carboxymycobactin. Asn85 carries N-linked (GlcNAc...) asparagine glycosylation. A disulfide bridge connects residues Cys96 and Cys195. Residue Tyr126 coordinates enterobactin. Residues Lys145, Lys154, and Tyr158 each coordinate a carboxymycobactin. Residue Lys154 participates in enterobactin binding.

This sequence belongs to the calycin superfamily. Lipocalin family. Monomer. Homodimer; disulfide-linked. Heterodimer; disulfide-linked with MMP9. In terms of tissue distribution, detected in neutrophils (at protein level). Expressed in bone marrow and in tissues that are prone to exposure to microorganism. High expression is found in bone marrow as well as in uterus, prostate, salivary gland, stomach, appendix, colon, trachea and lung. Expressed in the medullary tubules of the kidney. Not found in the small intestine or peripheral blood leukocytes.

The protein localises to the secreted. Its subcellular location is the cytoplasmic granule lumen. It localises to the cytoplasmic vesicle lumen. Its function is as follows. Iron-trafficking protein involved in multiple processes such as apoptosis, innate immunity and renal development. Binds iron through association with 2,3-dihydroxybenzoic acid (2,3-DHBA), a siderophore that shares structural similarities with bacterial enterobactin, and delivers or removes iron from the cell, depending on the context. Iron-bound form (holo-24p3) is internalized following binding to the SLC22A17 (24p3R) receptor, leading to release of iron and subsequent increase of intracellular iron concentration. In contrast, association of the iron-free form (apo-24p3) with the SLC22A17 (24p3R) receptor is followed by association with an intracellular siderophore, iron chelation and iron transfer to the extracellular medium, thereby reducing intracellular iron concentration. Involved in apoptosis due to interleukin-3 (IL3) deprivation: iron-loaded form increases intracellular iron concentration without promoting apoptosis, while iron-free form decreases intracellular iron levels, inducing expression of the proapoptotic protein BCL2L11/BIM, resulting in apoptosis. Involved in innate immunity; limits bacterial proliferation by sequestering iron bound to microbial siderophores, such as enterobactin. Can also bind siderophores from M.tuberculosis. This is Neutrophil gelatinase-associated lipocalin (LCN2) from Homo sapiens (Human).